The following is a 683-amino-acid chain: Long-chain-fatty-acid--CoA ligase 5 (683 aa).

Residues 12–32 (LPTPALICLLTFGTAIFLWLI) form a helical; Signal-anchor for type III membrane protein membrane-spanning segment. Topologically, residues 33–683 (NRPQPVLPLI…IKSLYESIEE (651 aa)) are cytoplasmic. Lys361 carries the post-translational modification N6-acetyllysine.

This sequence belongs to the ATP-dependent AMP-binding enzyme family.

The protein resides in the mitochondrion. The protein localises to the endoplasmic reticulum. Its subcellular location is the mitochondrion outer membrane. It is found in the endoplasmic reticulum membrane. It localises to the cell membrane. The enzyme catalyses a long-chain fatty acid + ATP + CoA = a long-chain fatty acyl-CoA + AMP + diphosphate. It catalyses the reaction (5Z,8Z,11Z,14Z)-eicosatetraenoate + ATP + CoA = (5Z,8Z,11Z,14Z)-eicosatetraenoyl-CoA + AMP + diphosphate. The catalysed reaction is hexadecanoate + ATP + CoA = hexadecanoyl-CoA + AMP + diphosphate. It carries out the reaction (E)-hexadec-2-enoate + ATP + CoA = (2E)-hexadecenoyl-CoA + AMP + diphosphate. The enzyme catalyses 15-hydroxy-(5Z,8Z,11Z,13E)-eicosatetraenoate + ATP + CoA = 15-hydroxy-(5Z,8Z,11Z,13E)-eicosatetraenoyl-CoA + AMP + diphosphate. It catalyses the reaction 12-hydroxy-(5Z,8Z,10E,14Z)-eicosatetraenoate + ATP + CoA = 12-hydroxy-(5Z,8Z,10E,14Z)-eicosatetraenoyl-CoA + AMP + diphosphate. The catalysed reaction is 5-hydroxy-(6E,8Z,11Z,14Z)-eicosatetraenoate + ATP + CoA = 5-hydroxy-(6E,8Z,11Z,14Z)-eicosatetraenoyl-CoA + AMP + diphosphate. It carries out the reaction 14,15-epoxy-(5Z,8Z,11Z)-eicosatrienoate + ATP + CoA = 14,15-epoxy-(5Z,8Z,11Z)-eicosatrienoyl-CoA + AMP + diphosphate. The enzyme catalyses 11,12-epoxy-(5Z,8Z,14Z)-eicosatrienoate + ATP + CoA = 11,12-epoxy-(5Z,8Z,14Z)-eicosatrienoyl-CoA + AMP + diphosphate. It catalyses the reaction (9Z)-octadecenoate + ATP + CoA = (9Z)-octadecenoyl-CoA + AMP + diphosphate. Functionally, catalyzes the conversion of long-chain fatty acids to their active form acyl-CoAs for both synthesis of cellular lipids, and degradation via beta-oxidation. ACSL5 may activate fatty acids from exogenous sources for the synthesis of triacylglycerol destined for intracellular storage. It was suggested that it may also stimulate fatty acid oxidation. At the villus tip of the crypt-villus axis of the small intestine may sensitize epithelial cells to apoptosis specifically triggered by the death ligand TRAIL. May have a role in the survival of glioma cells. Utilizes a wide range of saturated fatty acids with a preference for C16-C18 unsaturated fatty acids. The polypeptide is Long-chain-fatty-acid--CoA ligase 5 (Mus musculus (Mouse)).